The primary structure comprises 419 residues: UDP-N-acetylglucosamine 1-carboxyvinyltransferase (419 aa).

Position 22 to 23 (22 to 23 (KN)) interacts with phosphoenolpyruvate. Arginine 91 is a binding site for UDP-N-acetyl-alpha-D-glucosamine. The active-site Proton donor is the cysteine 115. Cysteine 115 is subject to 2-(S-cysteinyl)pyruvic acid O-phosphothioketal. UDP-N-acetyl-alpha-D-glucosamine contacts are provided by residues 120–124 (RPVDL), 160–163 (KVSV), aspartate 305, and valine 327.

It belongs to the EPSP synthase family. MurA subfamily.

Its subcellular location is the cytoplasm. It catalyses the reaction phosphoenolpyruvate + UDP-N-acetyl-alpha-D-glucosamine = UDP-N-acetyl-3-O-(1-carboxyvinyl)-alpha-D-glucosamine + phosphate. It participates in cell wall biogenesis; peptidoglycan biosynthesis. Functionally, cell wall formation. Adds enolpyruvyl to UDP-N-acetylglucosamine. The polypeptide is UDP-N-acetylglucosamine 1-carboxyvinyltransferase (Shigella sonnei (strain Ss046)).